A 141-amino-acid chain; its full sequence is Small ribosomal subunit protein bS16 (141 aa).

Polar residues-rich tracts occupy residues Asn-89–Ile-101 and Ala-109–Ile-129. The segment at Asn-89–Ser-141 is disordered.

Belongs to the bacterial ribosomal protein bS16 family.

The protein is Small ribosomal subunit protein bS16 of Trichodesmium erythraeum (strain IMS101).